Consider the following 70-residue polypeptide: Sec-independent protein translocase protein TatA (70 aa).

A helical membrane pass occupies residues 1–21 (MGSFSIWHWLIVLVVVALLFG). The interval 45-70 (KGESEQAEDETAKPLPKERDKDSARG) is disordered.

The protein belongs to the TatA/E family. In terms of assembly, the Tat system comprises two distinct complexes: a TatABC complex, containing multiple copies of TatA, TatB and TatC subunits, and a separate TatA complex, containing only TatA subunits. Substrates initially bind to the TatABC complex, which probably triggers association of the separate TatA complex to form the active translocon.

The protein resides in the cell inner membrane. Functionally, part of the twin-arginine translocation (Tat) system that transports large folded proteins containing a characteristic twin-arginine motif in their signal peptide across membranes. TatA could form the protein-conducting channel of the Tat system. This is Sec-independent protein translocase protein TatA from Phenylobacterium zucineum (strain HLK1).